The sequence spans 227 residues: Cytochrome c oxidase subunit 2 (227 aa).

The Mitochondrial intermembrane portion of the chain corresponds to 1 to 14 (MAYPLQLGLQDATS). Residues 15-45 (PIMEELMNFHDHTLMIVFLISSLVLYIISLM) traverse the membrane as a helical segment. At 46 to 59 (LTTKLTHTSTMDAQ) the chain is on the mitochondrial matrix side. Residues 60-87 (EVETIWTILPAAILVLIALPSLRILYMM) form a helical membrane-spanning segment. The Mitochondrial intermembrane segment spans residues 88–227 (DEINNPVLTV…YFENWSASMI (140 aa)). Residues His-161, Cys-196, Glu-198, Cys-200, His-204, and Met-207 each contribute to the Cu cation site. Glu-198 lines the Mg(2+) pocket. Position 218 is a phosphotyrosine (Tyr-218).

It belongs to the cytochrome c oxidase subunit 2 family. As to quaternary structure, component of the cytochrome c oxidase (complex IV, CIV), a multisubunit enzyme composed of 14 subunits. The complex is composed of a catalytic core of 3 subunits MT-CO1, MT-CO2 and MT-CO3, encoded in the mitochondrial DNA, and 11 supernumerary subunits COX4I, COX5A, COX5B, COX6A, COX6B, COX6C, COX7A, COX7B, COX7C, COX8 and NDUFA4, which are encoded in the nuclear genome. The complex exists as a monomer or a dimer and forms supercomplexes (SCs) in the inner mitochondrial membrane with NADH-ubiquinone oxidoreductase (complex I, CI) and ubiquinol-cytochrome c oxidoreductase (cytochrome b-c1 complex, complex III, CIII), resulting in different assemblies (supercomplex SCI(1)III(2)IV(1) and megacomplex MCI(2)III(2)IV(2)). Found in a complex with TMEM177, COA6, COX18, COX20, SCO1 and SCO2. Interacts with TMEM177 in a COX20-dependent manner. Interacts with COX20. Interacts with COX16. Cu cation serves as cofactor.

Its subcellular location is the mitochondrion inner membrane. It carries out the reaction 4 Fe(II)-[cytochrome c] + O2 + 8 H(+)(in) = 4 Fe(III)-[cytochrome c] + 2 H2O + 4 H(+)(out). Its function is as follows. Component of the cytochrome c oxidase, the last enzyme in the mitochondrial electron transport chain which drives oxidative phosphorylation. The respiratory chain contains 3 multisubunit complexes succinate dehydrogenase (complex II, CII), ubiquinol-cytochrome c oxidoreductase (cytochrome b-c1 complex, complex III, CIII) and cytochrome c oxidase (complex IV, CIV), that cooperate to transfer electrons derived from NADH and succinate to molecular oxygen, creating an electrochemical gradient over the inner membrane that drives transmembrane transport and the ATP synthase. Cytochrome c oxidase is the component of the respiratory chain that catalyzes the reduction of oxygen to water. Electrons originating from reduced cytochrome c in the intermembrane space (IMS) are transferred via the dinuclear copper A center (CU(A)) of subunit 2 and heme A of subunit 1 to the active site in subunit 1, a binuclear center (BNC) formed by heme A3 and copper B (CU(B)). The BNC reduces molecular oxygen to 2 water molecules using 4 electrons from cytochrome c in the IMS and 4 protons from the mitochondrial matrix. In Micaelamys namaquensis (Namaqua rock rat), this protein is Cytochrome c oxidase subunit 2 (MT-CO2).